Reading from the N-terminus, the 146-residue chain is Myoglobin (146 aa).

Residues 2 to 140 (ADLDAVLKCW…VIADLEANYK (139 aa)) form the Globin domain. His59 contributes to the nitrite binding site. Residue His59 participates in O2 binding. His88 contributes to the heme b binding site.

The protein belongs to the globin family. In terms of assembly, monomeric.

It is found in the cytoplasm. It localises to the sarcoplasm. It carries out the reaction Fe(III)-heme b-[protein] + nitric oxide + H2O = Fe(II)-heme b-[protein] + nitrite + 2 H(+). The catalysed reaction is H2O2 + AH2 = A + 2 H2O. Monomeric heme protein which primary function is to store oxygen and facilitate its diffusion within muscle tissues. Reversibly binds oxygen through a pentacoordinated heme iron and enables its timely and efficient release as needed during periods of heightened demand. Depending on the oxidative conditions of tissues and cells, and in addition to its ability to bind oxygen, it also has a nitrite reductase activity whereby it regulates the production of bioactive nitric oxide. Under stress conditions, like hypoxia and anoxia, it also protects cells against reactive oxygen species thanks to its pseudoperoxidase activity. This Katsuwonus pelamis (Skipjack tuna) protein is Myoglobin (mb).